Here is a 146-residue protein sequence, read N- to C-terminus: Large-conductance mechanosensitive channel (146 aa).

Helical transmembrane passes span 21–41 (VGII…ADLI), 44–64 (VIGL…LGDG), and 83–103 (GAFI…FLLV).

Belongs to the MscL family. In terms of assembly, homopentamer.

The protein resides in the cell inner membrane. Functionally, channel that opens in response to stretch forces in the membrane lipid bilayer. May participate in the regulation of osmotic pressure changes within the cell. In Cereibacter sphaeroides (strain ATCC 17025 / ATH 2.4.3) (Rhodobacter sphaeroides), this protein is Large-conductance mechanosensitive channel.